The primary structure comprises 31 residues: Cyclotide mra3 (31 aa).

3 cysteine pairs are disulfide-bonded: Cys-5–Cys-21, Cys-9–Cys-23, and Cys-14–Cys-28.

This is a cyclic peptide. In terms of processing, contains 3 disulfide bonds.

Functionally, probably participates in a plant defense mechanism. This is Cyclotide mra3 from Melicytus ramiflorus (Whitey wood).